Here is a 184-residue protein sequence, read N- to C-terminus: uncharacterized protein (184 aa).

This is an uncharacterized protein from Archaeoglobus fulgidus (strain ATCC 49558 / DSM 4304 / JCM 9628 / NBRC 100126 / VC-16).